The primary structure comprises 390 residues: MPKTAYVRTKPHLNIGTMGHVDHGKTTLTAAITKVLAERGSGTFVPFDRIDRAPEEAARGITINIAHVEYETDTRHYAHVDMPGHADYVKNMVTGAAQLDGAILVVSALDGIMPQTAEHVLLARQVGVDHIVVALNKADAGDEELTDLVELEVRELLTAHGYGGDSVPVVRVSGLKALEGDPRWTAAIDALLDAVDTYVPMPERYVDAPFLLPVENVLTITGRGTVVTGAVERGTIRVGDRVDVLGASVETVVTGLETFGKPMEEAQAGDNVALLLRGVPRDAVRRGHIVAAPGSVVPSRRFSARVYVLSTREGGRTTPVATGYRPQFYIRTADVVGDVDLGETAVARPGDTVTMTVSLGRDVPLEPGLGFAIREGGRTVGAGTVTTVED.

The 194-residue stretch at 10 to 203 (KPHLNIGTMG…AVDTYVPMPE (194 aa)) folds into the tr-type G domain. The tract at residues 19–26 (GHVDHGKT) is G1. 19–26 (GHVDHGKT) lines the GTP pocket. A Mg(2+)-binding site is contributed by Thr26. The interval 60-64 (GITIN) is G2. The segment at 81–84 (DMPG) is G3. Residues 81–85 (DMPGH) and 136–139 (NKAD) contribute to the GTP site. Residues 136–139 (NKAD) form a G4 region. Residues 173–175 (SGL) form a G5 region.

Belongs to the TRAFAC class translation factor GTPase superfamily. Classic translation factor GTPase family. EF-Tu/EF-1A subfamily. In terms of assembly, monomer.

It localises to the cytoplasm. It carries out the reaction GTP + H2O = GDP + phosphate + H(+). Functionally, GTP hydrolase that promotes the GTP-dependent binding of aminoacyl-tRNA to the A-site of ribosomes during protein biosynthesis. The polypeptide is Elongation factor Tu 2 (Streptomyces avermitilis (strain ATCC 31267 / DSM 46492 / JCM 5070 / NBRC 14893 / NCIMB 12804 / NRRL 8165 / MA-4680)).